Here is a 938-residue protein sequence, read N- to C-terminus: Isoleucine--tRNA ligase (938 aa).

Positions 58–68 match the 'HIGH' region motif; it reads PYANGHIHLGT. Glutamate 565 contributes to the L-isoleucyl-5'-AMP binding site. The short motif at 606 to 610 is the 'KMSKS' region element; that stretch reads KMSKS. Residue lysine 609 participates in ATP binding. Residues cysteine 905, cysteine 908, cysteine 925, and cysteine 928 each coordinate Zn(2+).

The protein belongs to the class-I aminoacyl-tRNA synthetase family. IleS type 1 subfamily. Monomer. Zn(2+) is required as a cofactor.

The protein resides in the cytoplasm. It catalyses the reaction tRNA(Ile) + L-isoleucine + ATP = L-isoleucyl-tRNA(Ile) + AMP + diphosphate. Its function is as follows. Catalyzes the attachment of isoleucine to tRNA(Ile). As IleRS can inadvertently accommodate and process structurally similar amino acids such as valine, to avoid such errors it has two additional distinct tRNA(Ile)-dependent editing activities. One activity is designated as 'pretransfer' editing and involves the hydrolysis of activated Val-AMP. The other activity is designated 'posttransfer' editing and involves deacylation of mischarged Val-tRNA(Ile). This is Isoleucine--tRNA ligase from Nitratidesulfovibrio vulgaris (strain DSM 19637 / Miyazaki F) (Desulfovibrio vulgaris).